We begin with the raw amino-acid sequence, 2554 residues long: Protein sevenless (2554 aa).

The span at M1–D10 shows a compositional bias: polar residues. The disordered stretch occupies residues M1–P25. Over M1 to R2123 the chain is Extracellular. Positions H11 to A20 are enriched in basic and acidic residues. N-linked (GlcNAc...) asparagine glycosylation is present at N30. The span at N51 to S70 shows a compositional bias: low complexity. The segment at N51 to R75 is disordered. An N-linked (GlcNAc...) asparagine glycan is attached at N129. The tract at residues S181–D208 is disordered. Residues H189 to D208 show a composition bias toward basic and acidic residues. The Fibronectin type-III 1 domain maps to A440–N533. N-linked (GlcNAc...) asparagine glycans are attached at residues N481, N505, N617, and N647. Positions A824–L924 constitute a Fibronectin type-III 2 domain. Residue N966 is glycosylated (N-linked (GlcNAc...) asparagine). The stretch at G1010–Y1053 is one LDL-receptor class B repeat. 2 Fibronectin type-III domains span residues L1202–V1290 and Q1294–E1397. N-linked (GlcNAc...) asparagine glycans are attached at residues N1228, N1313, N1353, N1550, N1557, N1639, N1725, N1756, N1804, N1889, N1947, and N2073. 3 consecutive Fibronectin type-III domains span residues P1801–E1901, L1902–T1988, and Q1995–F2117. The helical transmembrane segment at G2124–V2147 threads the bilayer. Over R2148–L2554 the chain is Cytoplasmic. Residues L2209–S2485 form the Protein kinase domain. Residues L2215 to V2223 and K2242 each bind ATP. D2343 serves as the catalytic Proton acceptor. A Phosphotyrosine; by autocatalysis modification is found at Y2380. The segment covering G2515 to R2527 has biased composition (basic and acidic residues). Residues G2515 to T2534 form a disordered region.

This sequence belongs to the protein kinase superfamily. Tyr protein kinase family. Insulin receptor subfamily. As to quaternary structure, may form a complex with drk and Sos. Binds the phosphotyrosine interaction domain (PID) of Dab.

It localises to the cell membrane. It catalyses the reaction L-tyrosyl-[protein] + ATP = O-phospho-L-tyrosyl-[protein] + ADP + H(+). In terms of biological role, receptor for an extracellular signal required to instruct a cell to differentiate into an R7 photoreceptor. The ligand for sev is the boss (bride of sevenless) protein on the surface of the neighboring R8 cell. The chain is Protein sevenless (sev) from Drosophila melanogaster (Fruit fly).